We begin with the raw amino-acid sequence, 411 residues long: MISKLKMPQPSVNIGMVGHVDHGKSTLTLALTGTKTDTHSEEIKRGISIKLGYADTPIYRCYDSSGNVHYTREKGENCDLERVISIVDAPGHETLMATMLSGSALMNGALLVIAANEHCPQPQTREHLTALEIMGIKNIIIVQNKIDLVTRERAIESYREIKNFVKGSIAENAPIIPVSAYHSTNIDALFEAIEKYIPSPKFNENDDPIMYIARSFDINRPGTPVSELKGGVIGGSLTQGEFALGDEIEIVPGIQTTKGNKTVWNNVTTEVVSLMAGKYSYDRIRPGGLAAIGTKLDPFLTKGDAFTGRIAGHVGKVPPVAFSMRLESHLLKRVVGSDQELNVEPIRPKETLMFTVATANTVGVVNAMKGSEIEVSLKYPVAAFNGMRVAIGRRVMNRWRLIGYGIIQSLE.

Residues 9–201 (QPSVNIGMVG…AIEKYIPSPK (193 aa)) enclose the tr-type G domain. The segment at 18-25 (GHVDHGKS) is G1. Residues aspartate 21, serine 25, glycine 46, and serine 48 each contribute to the Mg(2+) site. 21–26 (DHGKST) contacts GTP. A G2 region spans residues 46–50 (GISIK). Residues 88 to 91 (DAPG) form a G3 region. GTP contacts are provided by residues 144–147 (NKID) and 179–181 (SAY). Residues 144-147 (NKID) are G4. Positions 179 to 181 (SAY) are G5.

Belongs to the TRAFAC class translation factor GTPase superfamily. Classic translation factor GTPase family. EIF2G subfamily. In terms of assembly, heterotrimer composed of an alpha, a beta and a gamma chain. The cofactor is Mg(2+).

The enzyme catalyses GTP + H2O = GDP + phosphate + H(+). In terms of biological role, eIF-2 functions in the early steps of protein synthesis by forming a ternary complex with GTP and initiator tRNA. The polypeptide is Translation initiation factor 2 subunit gamma (Thermoplasma acidophilum (strain ATCC 25905 / DSM 1728 / JCM 9062 / NBRC 15155 / AMRC-C165)).